A 706-amino-acid polypeptide reads, in one-letter code: Choline transporter-like protein 2 (706 aa).

Topologically, residues 1–33 (MGKDSQNYYGKHGTPQKYDPTFKGPIYNRGCTD) are cytoplasmic. T14 bears the Phosphothreonine mark. A helical transmembrane segment spans residues 34–54 (VICCVLLFLAIVGYVAVGIIA). Residues 55 to 232 (WTHGDPRKVI…QIFEDYTVSW (178 aa)) are Extracellular-facing. N187 and N200 each carry an N-linked (GlcNAc...) asparagine glycan. A helical transmembrane segment spans residues 233-253 (YWIIIGLVIAMVLSLLFIVLL). The Cytoplasmic segment spans residues 254 to 256 (RFL). Residues 257–277 (AGIMVWVMIVMVILVLGYGIF) form a helical membrane-spanning segment. The Extracellular segment spans residues 278 to 315 (HCYMEYSRLRGEAGSDVSLVDLGFQTDLRVYLHLRQTW). A helical transmembrane segment spans residues 316-336 (MAFMIILSILEVVIILLLIFL). Residues 337–364 (RKRILIAIALIKEASRAVGHVMCSLLYP) lie on the Cytoplasmic side of the membrane. The helical transmembrane segment at 365 to 385 (LVTFFLLCLCIAYWASTSVFL) threads the bilayer. The Extracellular portion of the chain corresponds to 386–454 (STSNTAVYKV…LQIFNAFMFF (69 aa)). A glycan (N-linked (GlcNAc...) asparagine) is linked at N417. Residues 455 to 477 (WLANFVLALGQVTLAGAFASYYW) form a helical membrane-spanning segment. The Cytoplasmic segment spans residues 478–504 (AMRKPDDMPAFPLFSAFGRALRYHTGS). A helical transmembrane segment spans residues 505-525 (LAFGSLILAIVQIIRVMLEYL). The Extracellular segment spans residues 526–563 (DQRLKAAQNKFAKFLMVCLKCCFWCLEKFIKFLNRNAY). Residues 564-584 (IMIAIYGTNFCTSARNAFFLL) form a helical membrane-spanning segment. Residues 585-599 (MRNIIRVAVLDKVTD) lie on the Cytoplasmic side of the membrane. The helical transmembrane segment at 600–620 (FLFLLGKLLIVGSVGILAFFF) threads the bilayer. Over 621 to 638 (FTHRIRIVQDTAPPLNYY) the chain is Extracellular. Residues 639 to 659 (WVPILTVIIGSYLIAHGFFSV) form a helical membrane-spanning segment. The Cytoplasmic segment spans residues 660–706 (YGMCVDTLFLCFLEDLERNDGSAERPYFMSSTLKKLLNKTNKKVAES).

This sequence belongs to the CTL (choline transporter-like) family. As to quaternary structure, interacts with COCH. Glycosylated, glycosylation differs from tissue to tissue. The molecular mass of the mature glycosylated protein is highest in kidney, followed by lung, colon and spleen, then brain and tongue. As to expression, expressed at high levels in lung, colon, inner ear and spleen (at protein level). Progressively lower levels in brain, tongue, liver and kidney (at protein level). In the kidney, prominent expression in glomeruli in the lining of Bowman's capsule and on the mesangial cells adjacent to the vessels within the glomerulus (at protein level). Strongly expressed on the membranes of splenocytes and in lung parenchyme (at protein level). In terms of tissue distribution, expressed at higher levels than isoform 2 in colon, heart, kidney, lung, cochlea, tongue and muscle, as well as in the inner ear. Predominantly expressed in brain, liver and spleen.

The protein resides in the cell membrane. It localises to the mitochondrion outer membrane. The catalysed reaction is choline(out) + n H(+)(in) = choline(in) + n H(+)(out). It catalyses the reaction ethanolamine(out) + n H(+)(in) = ethanolamine(in) + n H(+)(out). Functionally, choline/H+ antiporter, mainly in mitochodria. Also acts as a low-affinity ethanolamine/H+ antiporter, regulating the supply of extracellular ethanolamine (Etn) for the CDP-Etn pathway, redistribute intracellular Etn and balance the CDP-Cho and CDP-Etn arms of the Kennedy pathway. The polypeptide is Choline transporter-like protein 2 (Slc44a2) (Mus musculus (Mouse)).